Consider the following 324-residue polypeptide: Calpain-2 catalytic subunit (324 aa).

Positions Tyr1–Asp138 are domain III. Residues Glu139–Asp153 are linker. The interval Phe158 to Leu324 is domain IV. The Ca(2+) site is built by Ala166, Asp169, Glu171, Glu176, Asp209, Asp211, Ser213, Lys215, Glu220, Asp239, Asp241, Ser243, Thr245, Glu250, Asp282, and Asn285. 2 consecutive EF-hand domains span residues Asp190–Leu224 and Thr226–Lys261.

This sequence belongs to the peptidase C2 family. As to quaternary structure, forms a heterodimer with a small (regulatory) subunit (CAPNS1). Interacts with CPEB3; this leads to cleavage of CPEB3. Ca(2+) serves as cofactor. Ubiquitous.

The protein resides in the cytoplasm. It is found in the cell membrane. It carries out the reaction Broad endopeptidase specificity.. Its activity is regulated as follows. Activated by 200-1000 micromolar concentrations of calcium and inhibited by calpastatin. Calcium-regulated non-lysosomal thiol-protease which catalyzes limited proteolysis of substrates involved in cytoskeletal remodeling and signal transduction. Proteolytically cleaves MYOC at 'Arg-226'. Proteolytically cleaves CPEB3 following neuronal stimulation which abolishes CPEB3 translational repressor activity, leading to translation of CPEB3 target mRNAs. The polypeptide is Calpain-2 catalytic subunit (CAPN2) (Sus scrofa (Pig)).